Here is a 329-residue protein sequence, read N- to C-terminus: GTP 3',8-cyclase (329 aa).

The Radical SAM core domain maps to 8–234 (AFARKFYYLR…QLRQRSDGPA (227 aa)). Residue Arg17 participates in GTP binding. [4Fe-4S] cluster contacts are provided by Cys24 and Cys28. Tyr30 provides a ligand contact to S-adenosyl-L-methionine. Cys31 contributes to the [4Fe-4S] cluster binding site. A GTP-binding site is contributed by Arg68. Gly72 is a binding site for S-adenosyl-L-methionine. Thr99 serves as a coordination point for GTP. Ser123 is an S-adenosyl-L-methionine binding site. A GTP-binding site is contributed by Lys160. Met194 is an S-adenosyl-L-methionine binding site. Cys257 and Cys260 together coordinate [4Fe-4S] cluster. Position 262–264 (262–264 (RLR)) interacts with GTP. Cys274 serves as a coordination point for [4Fe-4S] cluster.

Belongs to the radical SAM superfamily. MoaA family. As to quaternary structure, monomer and homodimer. [4Fe-4S] cluster serves as cofactor.

The enzyme catalyses GTP + AH2 + S-adenosyl-L-methionine = (8S)-3',8-cyclo-7,8-dihydroguanosine 5'-triphosphate + 5'-deoxyadenosine + L-methionine + A + H(+). It functions in the pathway cofactor biosynthesis; molybdopterin biosynthesis. In terms of biological role, catalyzes the cyclization of GTP to (8S)-3',8-cyclo-7,8-dihydroguanosine 5'-triphosphate. In Salmonella paratyphi B (strain ATCC BAA-1250 / SPB7), this protein is GTP 3',8-cyclase.